The primary structure comprises 200 residues: Cation channel sperm-associated auxiliary subunit zeta (200 aa).

Residues 1 to 29 (MEEKPSKVSLKSSDRQGSDEESVHSDTRD) are compositionally biased toward basic and acidic residues. Disordered regions lie at residues 1 to 31 (MEEK…RDLW) and 58 to 78 (NISK…EGYK).

In terms of assembly, component of the CatSper complex or CatSpermasome composed of the core pore-forming members CATSPER1, CATSPER2, CATSPER3 and CATSPER4 as well as auxiliary members CATSPERB, CATSPERG, CATSPERD, CATSPERE, CATSPERZ, C2CD6/CATSPERT, TMEM249, TMEM262 and EFCAB9. HSPA1 may be an additional auxiliary complex member. The core complex members CATSPER1, CATSPER2, CATSPER3 and CATSPER4 form a heterotetrameric channel. The auxiliary CATSPERB, CATSPERG, CATSPERD and CATSPERE subunits form a pavilion-like structure over the pore which stabilizes the complex through interactions with CATSPER4, CATSPER3, CATSPER1 and CATSPER2 respectively. TMEM262/CATSPERH interacts with CATSPERB, further stabilizing the complex. C2CD6/CATSPERT interacts at least with CATSPERD and is required for targeting the CatSper complex in the flagellar membrane. Interacts with EFCAB9; the interaction is direct, Ca(2+)-dependent and connects EFCAB9 with the CatSper complex. Dissociates from EFCAB9 at elevated pH.

The protein resides in the cell projection. Its subcellular location is the cilium. It localises to the flagellum membrane. Its function is as follows. Auxiliary component of the CatSper complex, a complex involved in sperm cell hyperactivation. Sperm cell hyperactivation is needed for sperm motility which is essential late in the preparation of sperm for fertilization. Required for a distribution of the CatSper complex in linear quadrilateral nanodomains along the flagellum, maximizing fertilization inside the mammalian female reproductive tract. Together with EFCAB9, associates with the CatSper channel pore and is required for the two-row structure of each single CatSper channel. The sequence is that of Cation channel sperm-associated auxiliary subunit zeta from Homo sapiens (Human).